Reading from the N-terminus, the 610-residue chain is UvrABC system protein C (610 aa).

The region spanning 16–94 (NQPGVYRMYN…IKQYLPKYNV (79 aa)) is the GIY-YIG domain. The 36-residue stretch at 204 to 239 (NQVLSILVEKMEQASRELRFEDAAKARDQIQAIRRV) folds into the UVR domain.

The protein belongs to the UvrC family. As to quaternary structure, interacts with UvrB in an incision complex.

It is found in the cytoplasm. In terms of biological role, the UvrABC repair system catalyzes the recognition and processing of DNA lesions. UvrC both incises the 5' and 3' sides of the lesion. The N-terminal half is responsible for the 3' incision and the C-terminal half is responsible for the 5' incision. In Vibrio cholerae serotype O1 (strain ATCC 39315 / El Tor Inaba N16961), this protein is UvrABC system protein C.